The chain runs to 689 residues: Dipeptidyl aminopeptidase BIII (689 aa).

Positions 1–26 (MRHPAFRLTLLASTVAFALAPQAAQA) are cleaved as a signal peptide. Catalysis depends on charge relay system residues Ser-506, Asp-593, and His-625.

The protein belongs to the peptidase S9C family. Monomer.

Its activity is regulated as follows. Strongly inhibited by the serine protease inhibitor diisopropyl fluorophosphate (DFP), chymostatin, leupeptin, 0.5 mM ZnCl(2), 10 mM o-phenanthlorine and N-tosyl-L-phenyl-alanyl chloromethyl ketone (TPCK), but not by N-tosyl-L-lysyl chloromethyl ketone (TLCK). Activity is not affected significantly by iodoacetate (IAA), L-trans-epoxysuccinyl-leucylamido(4-guanido)butane (E64), pepstatin A and phenylmethanesulfonyl fluoride (PMSF). Activity is stimulated by addition of 0.5 mM CaCl(2), 10 mM EDTA and N-ethylmaleimide (NEM). Exopeptidase that catalyzes the removal of dipeptide units (NH2-P2-P1- or -P1'-P2'-COOH) from the free amino or carboxy termini. Prefers substrates composed of bulky, hydrophobic amino acids at P1 and P1' positions. Has endopeptidase activity on N-terminally blocked peptide derivatives which contain aromatic amino acid residue at the P1 position. Exopeptidase activity is much higher than its endopeptidase activity. The sequence is that of Dipeptidyl aminopeptidase BIII from Pseudoxanthomonas mexicana.